Here is a 755-residue protein sequence, read N- to C-terminus: MSASPLLDNQCDHLPTKMVDLTMVDKADELDRRVSDAFLEREASRGRRITQISTECSAGLACKRLADGRFPEISAGGKVAVLSAYIYIGKEILGRILESKPWARATVSGLVAIDLAPFCMDFSEAQLIQALFLLSGKRCAPIDLSHFVAISISKTAGFRTLPMPLYENGTMKCVTGFTITLEGAVPFDMVAYGRNLMLKGSAGSFPTIDLLYDYRPFFDQCSDSGRIGFFPEDVPKPKVAVIGAGISGLVVANELLHAGVDDVTIYEASDRVGGKLWSHAFRDAPSVVAEMGAMRFPPAAFCLFFFLERYGLSSMRPFPNPGTVDTYLVYQGVQYMWKAGQLPPKLFHRVYNGWRAFLKDGFYERDIVLASPVAITQALKSGDIRWAHDSWQIWLNRFGRESFSSGIERIFLGTHPPGGETWSFPHDWDLFKLMGIGSGGFGPVFESGFIEILRLVINGYEENQRMCPEGISELPRRIASEVVNGVSVSQRICHVQVRAIQKEKTKIKIRLKSGISELYDKVVVTSGLANIQLRHCLTCDTNIFQAPVNQAVDNSHMTGSSKLFLMTERKFWLDHILPSCVLMDGIAKAVYCLDYEPQDPNGKGLVLISYTWEDDSHKLLAVPDKKERLCLLRDAISRSFPAFAQHLFPACADYDQNVIQHDWLTDENAGGAFKLNRRGEDFYSEELFFQALDTANDTGVYLAGCSCSFTGGWVEGAIQTACNAVCAIIHNCGGILAKGNPLEHSWKRYNYRTRN.

Residues Ser247, Glu267, Lys275, and Arg295 each coordinate FMN. Arg295 contacts substrate.

It belongs to the tryptophan 2-monooxygenase family. It depends on FMN as a cofactor.

It catalyses the reaction L-tryptophan + O2 = indole-3-acetamide + CO2 + H2O. It participates in plant hormone metabolism; auxin biosynthesis. The chain is Tryptophan 2-monooxygenase (tms1) from Rhizobium radiobacter (Agrobacterium tumefaciens).